Consider the following 648-residue polypeptide: Acyl-CoA-binding domain-containing protein 5 (648 aa).

The ACB domain occupies tyrosine 13–proline 107. Residues lysine 34, tyrosine 49 to glutamine 53, and lysine 75 contribute to the an acyl-CoA site. 6 Kelch repeats span residues lysine 196–histidine 244, glutamine 256–lysine 306, serine 307–glutamate 357, tyrosine 359–glutamate 408, asparagine 409–serine 457, and isoleucine 464–asparagine 509. Serine 517 bears the Phosphoserine mark. Positions lysine 520 to serine 632 form a coiled coil. The span at threonine 625–glycine 634 shows a compositional bias: polar residues. A disordered region spans residues threonine 625–threonine 648.

Belongs to the ACBP family. As to expression, expressed in roots, stems, leaves, flowers and siliques.

It is found in the cytoplasm. In terms of biological role, binds medium- and long-chain acyl-CoA esters with very high affinity. Can interact in vitro with oleoyl-CoA, barely with palmitoyl-CoA, but not with arachidonyl-CoA. May function as an intracellular carrier of acyl-CoA esters. The chain is Acyl-CoA-binding domain-containing protein 5 (ACBP5) from Arabidopsis thaliana (Mouse-ear cress).